The chain runs to 122 residues: UPF0145 protein Bmul_3577/BMULJ_04940 (122 aa).

The protein belongs to the UPF0145 family.

This chain is UPF0145 protein Bmul_3577/BMULJ_04940, found in Burkholderia multivorans (strain ATCC 17616 / 249).